The following is a 101-amino-acid chain: NAD(P)H-quinone oxidoreductase subunit 4L, chloroplastic (101 aa).

A run of 3 helical transmembrane segments spans residues 2-22, 32-52, and 61-81; these read MLEH…YGLI, MCLE…SDFF, and IFSI…PAIV.

Belongs to the complex I subunit 4L family. In terms of assembly, NDH is composed of at least 16 different subunits, 5 of which are encoded in the nucleus.

Its subcellular location is the plastid. It localises to the chloroplast thylakoid membrane. It carries out the reaction a plastoquinone + NADH + (n+1) H(+)(in) = a plastoquinol + NAD(+) + n H(+)(out). The enzyme catalyses a plastoquinone + NADPH + (n+1) H(+)(in) = a plastoquinol + NADP(+) + n H(+)(out). Functionally, NDH shuttles electrons from NAD(P)H:plastoquinone, via FMN and iron-sulfur (Fe-S) centers, to quinones in the photosynthetic chain and possibly in a chloroplast respiratory chain. The immediate electron acceptor for the enzyme in this species is believed to be plastoquinone. Couples the redox reaction to proton translocation, and thus conserves the redox energy in a proton gradient. The polypeptide is NAD(P)H-quinone oxidoreductase subunit 4L, chloroplastic (Lotus japonicus (Lotus corniculatus var. japonicus)).